Consider the following 154-residue polypeptide: uncharacterized protein (154 aa).

The interval 104-124 (NNNNNDNDNNNKEKEDNDEKE) is disordered. The segment covering 112–124 (NNNKEKEDNDEKE) has biased composition (basic and acidic residues).

This is an uncharacterized protein from Dictyostelium discoideum (Social amoeba).